The following is a 278-amino-acid chain: NAD kinase (278 aa).

Asp56 functions as the Proton acceptor in the catalytic mechanism. NAD(+)-binding positions include 56-57 (DG), 132-133 (NE), Arg158, Asp160, and 171-176 (TAYNKS).

Belongs to the NAD kinase family. The cofactor is a divalent metal cation.

It is found in the cytoplasm. It carries out the reaction NAD(+) + ATP = ADP + NADP(+) + H(+). Its function is as follows. Involved in the regulation of the intracellular balance of NAD and NADP, and is a key enzyme in the biosynthesis of NADP. Catalyzes specifically the phosphorylation on 2'-hydroxyl of the adenosine moiety of NAD to yield NADP. In Streptococcus pyogenes serotype M1, this protein is NAD kinase.